The chain runs to 611 residues: Phosphatidylinositol 3,4,5-trisphosphate 3-phosphatase and protein-tyrosine-phosphatase PTEN2A (611 aa).

Disordered regions lie at residues 1 to 42 and 87 to 109; these read MSSE…GVAS and GIRLSPKSPQTNDTTTEGTSSAT. A Phosphoserine modification is found at Ser91. Low complexity predominate over residues 100–109; the sequence is TTTEGTSSAT. The region spanning 145–324 is the Phosphatase tensin-type domain; sequence RRYQEGGFDL…KYFERILTYF (180 aa). Residue Cys263 is the Phosphocysteine intermediate of the active site. The C2 tensin-type domain maps to 331–458; sequence GRRCMLRGFR…FMVEVVLADI (128 aa). The span at 462-486 shows a compositional bias: polar residues; it reads IPTNPSSETASKTPEETSAANSSPV. The tract at residues 462-589 is disordered; the sequence is IPTNPSSETA…VNASSSSESE (128 aa). Residues 495–507 are compositionally biased toward basic and acidic residues; sequence PDKETENPDKDDV. The residue at position 509 (Ser509) is a Phosphoserine. Composition is skewed to polar residues over residues 514-530 and 549-565; these read DSTGPTKTTSSASSQTP and VSISGNKGSSQPVQGVT.

It belongs to the PTEN phosphatase protein family. As to expression, expressed in seedlings, roots, stems, leaves, flowers and siliques. However, at protein level, not observed in older leaves and mature siliques.

The catalysed reaction is O-phospho-L-tyrosyl-[protein] + H2O = L-tyrosyl-[protein] + phosphate. It carries out the reaction a 1,2-diacyl-sn-glycero-3-phospho-(1D-myo-inositol-3,4,5-trisphosphate) + H2O = a 1,2-diacyl-sn-glycero-3-phospho-(1D-myo-inositol-4,5-bisphosphate) + phosphate. Binds phosphatidic acid. Protein tyrosine phosphatase that also exhibits lipid phosphatase activity. Hydrolyzed poorly p-nitrophenyl phosphate (p-NPP). Can use PtdIns isomers as substrates. Removes efficiently phosphate from the D3 position of the inositol ring, less from the D4 position and not at all from the D5 position on monophosphorylated PtdIns isomers (PIPs). The presence of a phosphate group in the D5 position on PIP(2) isomers reduces lipid phosphatase activity. Mostly active on PtdIns(3)P and PtdIns(3,4)P(2), to a lower extent, on PtdIns(4)P and PtdIns(3,5)P(2), but barely against PtdIns(3,4,5)P(3) as substrate. The polypeptide is Phosphatidylinositol 3,4,5-trisphosphate 3-phosphatase and protein-tyrosine-phosphatase PTEN2A (Arabidopsis thaliana (Mouse-ear cress)).